An 862-amino-acid chain; its full sequence is Short transient receptor potential channel 7 (862 aa).

The tract at residues M1–G21 is disordered. Over M1 to K351 the chain is Cytoplasmic. A compositionally biased stretch (basic residues) spans M10–G21. A Phosphothreonine; by PKG/PRKG1 modification is found at T15. ANK repeat units lie at residues P42 to F71, M77 to V106, D108 to G134, and H163 to R192. A helical transmembrane segment spans residues F352–A372. Residues P373–S383 are Extracellular-facing. The helical transmembrane segment at P384–V404 threads the bilayer. At N405–E465 the chain is on the cytoplasmic side. A helical transmembrane segment spans residues Y466 to F486. Over T487–Q537 the chain is Extracellular. An N-linked (GlcNAc...) asparagine glycan is attached at N514. The helical transmembrane segment at I538–I558 threads the bilayer. The Cytoplasmic portion of the chain corresponds to L559 to K581. The chain crosses the membrane as a helical span at residues F582 to S602. At Y603–V651 the chain is on the extracellular side. The chain crosses the membrane as a helical span at residues L652–I672. Over N673 to I862 the chain is Cytoplasmic.

The protein belongs to the transient receptor (TC 1.A.4) family. STrpC subfamily. TRPC7 sub-subfamily. Interacts with MX1 and RNF24. Interacts (via ANK-repeat domains) with PRKG1. Phosphorylation by PRKG1 at Thr-15 negatively regulates TRPC7 activity.

The protein localises to the cell membrane. Its subcellular location is the nucleus envelope. It carries out the reaction Ca(2+)(in) = Ca(2+)(out). In terms of biological role, forms a receptor-activated non-selective calcium permeant cation channel. Probably is operated by a phosphatidylinositol second messenger system activated by receptor tyrosine kinases or G-protein coupled receptors. Activated by diacylglycerol (DAG). May also be activated by intracellular calcium store depletion. The protein is Short transient receptor potential channel 7 (TRPC7) of Homo sapiens (Human).